The sequence spans 536 residues: Protein Rep68 (536 aa).

The region spanning 1-199 is the PV NS1-Nuc domain; that stretch reads MPGFYEIVIK…AQHLTHVSQT (199 aa). A divalent metal cation-binding residues include glutamate 83, histidine 90, and histidine 92. The RCR-2 motif lies at 90 to 92; it reads HMH. Catalysis depends on tyrosine 156, which acts as the For nuclease activity. An RCR-3 motif is present at residues 156–160; that stretch reads YLLPK. A compositionally biased stretch (polar residues) spans 196–211; that stretch reads VSQTQEQNKENQNPNS. Positions 196–216 are disordered; the sequence is VSQTQEQNKENQNPNSDAPVI. The SF3 helicase domain occupies 308–463; sequence DPQYAASVFL…LDHDFGKVTK (156 aa). 334–341 is an ATP binding site; sequence GPATTGKT. Residues 488 to 536 form a disordered region; the sequence is KGGAKKRPAPSDADISEPKRVRESVAQPSTSDAEASINYADRLARGHSL.

As to quaternary structure, interacts with host TOPORS. Interacts with host KCTD5. It depends on a divalent metal cation as a cofactor.

The protein localises to the host nucleus. The enzyme catalyses ATP + H2O = ADP + phosphate + H(+). In terms of biological role, plays an essential role in the initiation of viral DNA synthesis. Binds specifically to an inverted terminal repeat element (ITR) on the 3' and 5' ends of the viral DNA, where it cleaves a site specifically to generate a priming site for initiation of the synthesis of a complementary strand. Also plays a role as transcriptional regulator, DNA helicase and as key factor in site-specific integration of the viral genome. Inhibits the host cell cycle G1/S and G2/M transitions. These arrests may provide essential cellular factors for viral DNA replication. In Mammalia (AAV-2), this protein is Protein Rep68 (Rep68).